Consider the following 318-residue polypeptide: Acetyl-coenzyme A carboxylase carboxyl transferase subunit alpha (318 aa).

In terms of domain architecture, CoA carboxyltransferase C-terminal spans 32 to 293 (NLSDELERLR…KERLVSQLDR (262 aa)).

This sequence belongs to the AccA family. Acetyl-CoA carboxylase is a heterohexamer composed of biotin carboxyl carrier protein (AccB), biotin carboxylase (AccC) and two subunits each of ACCase subunit alpha (AccA) and ACCase subunit beta (AccD).

It localises to the cytoplasm. The catalysed reaction is N(6)-carboxybiotinyl-L-lysyl-[protein] + acetyl-CoA = N(6)-biotinyl-L-lysyl-[protein] + malonyl-CoA. It functions in the pathway lipid metabolism; malonyl-CoA biosynthesis; malonyl-CoA from acetyl-CoA: step 1/1. Its function is as follows. Component of the acetyl coenzyme A carboxylase (ACC) complex. First, biotin carboxylase catalyzes the carboxylation of biotin on its carrier protein (BCCP) and then the CO(2) group is transferred by the carboxyltransferase to acetyl-CoA to form malonyl-CoA. This chain is Acetyl-coenzyme A carboxylase carboxyl transferase subunit alpha, found in Saccharophagus degradans (strain 2-40 / ATCC 43961 / DSM 17024).